A 580-amino-acid chain; its full sequence is 2-succinyl-5-enolpyruvyl-6-hydroxy-3-cyclohexene-1-carboxylate synthase (580 aa).

Positions 178 to 199 (LEPTPMPGDLTEPPAAAQPRDD) are disordered.

Belongs to the TPP enzyme family. MenD subfamily. Homodimer. Mg(2+) is required as a cofactor. Mn(2+) serves as cofactor. It depends on thiamine diphosphate as a cofactor.

The enzyme catalyses isochorismate + 2-oxoglutarate + H(+) = 5-enolpyruvoyl-6-hydroxy-2-succinyl-cyclohex-3-ene-1-carboxylate + CO2. It participates in quinol/quinone metabolism; 1,4-dihydroxy-2-naphthoate biosynthesis; 1,4-dihydroxy-2-naphthoate from chorismate: step 2/7. The protein operates within quinol/quinone metabolism; menaquinone biosynthesis. Catalyzes the thiamine diphosphate-dependent decarboxylation of 2-oxoglutarate and the subsequent addition of the resulting succinic semialdehyde-thiamine pyrophosphate anion to isochorismate to yield 2-succinyl-5-enolpyruvyl-6-hydroxy-3-cyclohexene-1-carboxylate (SEPHCHC). This Roseiflexus castenholzii (strain DSM 13941 / HLO8) protein is 2-succinyl-5-enolpyruvyl-6-hydroxy-3-cyclohexene-1-carboxylate synthase.